The following is a 1020-amino-acid chain: Sodium/potassium-transporting ATPase subunit alpha-2 (1020 aa).

The propeptide occupies 1–5; it reads MGRGA. The segment at 1–31 is disordered; that stretch reads MGRGAGREYSPAATTAENGGGKKKQKEKELD. Residues 6-85 are Cytoplasmic-facing; it reads GREYSPAATT…NALTPPPTTP (80 aa). Residue serine 10 is modified to Phosphoserine. Residues 80-82 are interaction with phosphoinositide-3 kinase; the sequence is PPP. A helical membrane pass occupies residues 86–106; sequence EWVKFCRQLFGGFSILLWIGA. The Extracellular portion of the chain corresponds to 107 to 129; it reads ILCFLAYGIQAAMEDEPSNDNLY. A helical transmembrane segment spans residues 130 to 150; the sequence is LGVVLAAVVIVTGCFSYYQEA. At 151–286 the chain is on the cytoplasmic side; that stretch reads KSSKIMDSFK…VGRTPIAMEI (136 aa). The span at 212–227 shows a compositional bias: polar residues; that stretch reads DNSSLTGESEPQTRSP. The disordered stretch occupies residues 212-231; it reads DNSSLTGESEPQTRSPEFTH. The helical transmembrane segment at 287–306 threads the bilayer; that stretch reads EHFIQLITGVAVFLGVSFFV. Topologically, residues 307–318 are extracellular; sequence LSLILGYSWLEA. A helical transmembrane segment spans residues 319–336; the sequence is VIFLIGIIVANVPEGLLA. Topologically, residues 337–769 are cytoplasmic; that stretch reads TVTVCLTLTA…EEGRLIFDNL (433 aa). Aspartate 374 (4-aspartylphosphate intermediate) is an active-site residue. 4 positions are modified to phosphoserine: serine 439, serine 450, serine 496, and serine 559. A Phosphothreonine modification is found at threonine 570. 2 positions are modified to phosphoserine: serine 587 and serine 672. Mg(2+) contacts are provided by aspartate 714 and aspartate 718. Residues 770-789 form a helical membrane-spanning segment; it reads KKSIAYTLTSNIPEITPFLL. The Extracellular portion of the chain corresponds to 790 to 799; that stretch reads FIIANIPLPL. The chain crosses the membrane as a helical span at residues 800–820; sequence GTVTILCIDLGTDMVPAISLA. At 821–840 the chain is on the cytoplasmic side; it reads YEAAESDIMKRQPRNSQTDK. Serine 826 carries the phosphoserine modification. Residues 841-863 traverse the membrane as a helical segment; it reads LVNERLISMAYGQIGMIQALGGF. Residues 864 to 915 lie on the Extracellular side of the membrane; it reads FTYFVILAENGFLPSRLLGIRLDWDDRTMNDLEDSYGQEWTYEQRKVVEFTC. A helical membrane pass occupies residues 916-935; the sequence is HTAFFASIVVVQWADLIICK. Over 936–948 the chain is Cytoplasmic; that stretch reads TRRNSVFQQGMKN. Serine 940 bears the Phosphoserine; by PKA mark. Residues 949-967 traverse the membrane as a helical segment; the sequence is KILIFGLLEETALAAFLSY. The Extracellular portion of the chain corresponds to 968-982; it reads CPGMGVALRMYPLKV. A helical transmembrane segment spans residues 983–1003; the sequence is TWWFCAFPYSLLIFIYDEVRK. The Cytoplasmic portion of the chain corresponds to 1004–1020; the sequence is LILRRYPGGWVEKETYY.

The protein belongs to the cation transport ATPase (P-type) (TC 3.A.3) family. Type IIC subfamily. The sodium/potassium-transporting ATPase is composed of a catalytic alpha subunit, an auxiliary non-catalytic beta subunit and an additional regulatory subunit. Interacts with regulatory subunit FXYD1.

The protein resides in the membrane. The protein localises to the cell membrane. The enzyme catalyses K(+)(out) + Na(+)(in) + ATP + H2O = K(+)(in) + Na(+)(out) + ADP + phosphate + H(+). Its function is as follows. This is the catalytic component of the active enzyme, which catalyzes the hydrolysis of ATP coupled with the exchange of sodium and potassium ions across the plasma membrane. This action creates the electrochemical gradient of sodium and potassium, providing the energy for active transport of various nutrients. The sequence is that of Sodium/potassium-transporting ATPase subunit alpha-2 (ATP1A2) from Homo sapiens (Human).